The sequence spans 264 residues: Glutamate racemase (264 aa).

Substrate-binding positions include 10 to 11 (DS) and 42 to 43 (YG). Cysteine 73 (proton donor/acceptor) is an active-site residue. 74–75 (NT) provides a ligand contact to substrate. The active-site Proton donor/acceptor is cysteine 183. 184 to 185 (TH) contacts substrate.

This sequence belongs to the aspartate/glutamate racemases family.

The enzyme catalyses L-glutamate = D-glutamate. Its pathway is cell wall biogenesis; peptidoglycan biosynthesis. Its function is as follows. Provides the (R)-glutamate required for cell wall biosynthesis. The chain is Glutamate racemase from Streptococcus pyogenes serotype M4 (strain MGAS10750).